We begin with the raw amino-acid sequence, 66 residues long: Beta-toxin Chui3 (66 aa).

An LCN-type CS-alpha/beta domain is found at 1–66 (KEGYLVELGT…VWPLKNKTCR (66 aa)). 4 disulfides stabilise this stretch: Cys-12–Cys-65, Cys-16–Cys-41, Cys-25–Cys-46, and Cys-29–Cys-48.

Belongs to the long (4 C-C) scorpion toxin superfamily. Sodium channel inhibitor family. Beta subfamily. In terms of tissue distribution, expressed by the venom gland.

It is found in the secreted. Its function is as follows. Beta toxins bind voltage-independently at site-4 of sodium channels (Nav) and shift the voltage of activation toward more negative potentials thereby affecting sodium channel activation and promoting spontaneous and repetitive firing. Acts on human sodium channel Nav1.6/SCN8A. The chain is Beta-toxin Chui3 from Centruroides huichol (Scorpion).